Here is a 434-residue protein sequence, read N- to C-terminus: Ribulose bisphosphate carboxylase-like protein (434 aa).

3 residues coordinate Mg(2+): Lys198, Asp200, and Glu201. Lys198 bears the N6-carboxylysine mark.

Belongs to the RuBisCO large chain family. Type IV subfamily. Homodimer. The cofactor is Mg(2+).

Functionally, may be involved in sulfur metabolism and oxidative stress response. Does not show RuBisCO activity. The sequence is that of Ribulose bisphosphate carboxylase-like protein from Chlorobaculum thiosulfatiphilum (Chlorobium limicola f.sp. thiosulfatophilum).